The following is a 276-amino-acid chain: Chlorophyll a-b binding protein CP29.3, chloroplastic (276 aa).

A chloroplast-targeting transit peptide spans 1–29 (MATTTAAAASGIFGIRIQDPRPGTGRVQA). Positions 1–53 (MATTTAAAASGIFGIRIQDPRPGTGRVQARFGFSFGKKKPAPPPKKSRQVQDD) are disordered. Residues 36-48 (GKKKPAPPPKKSR) are compositionally biased toward basic residues. Trp-59 contacts chlorophyll b. Positions 79, 141, and 144 each coordinate chlorophyll a. A helical transmembrane segment spans residues 147–167 (WAMLGTLGAIAVEALTGIAWQ). Leu-181 is a chlorophyll a binding site. The helical transmembrane segment at 185 to 205 (LPFSLTTLIWIEVLVVGYIEF) threads the bilayer. The chlorophyll b site is built by Glu-204 and Arg-207. Residues Glu-242, His-245, Arg-247, and Gln-259 each contribute to the chlorophyll a site. The helical transmembrane segment at 248 to 268 (LAMVAFLIFALQAAFTGKGPV) threads the bilayer.

Belongs to the light-harvesting chlorophyll a/b-binding (LHC) protein family. In terms of assembly, the LHC complex consists of chlorophyll a-b binding proteins. The cofactor is Binds at least 14 chlorophylls (8 Chl-a and 6 Chl-b) and carotenoids such as lutein and neoxanthin.. Post-translationally, photoregulated by reversible phosphorylation of its threonine residues.

It is found in the plastid. It localises to the chloroplast thylakoid membrane. In terms of biological role, the light-harvesting complex (LHC) functions as a light receptor, it captures and delivers excitation energy to photosystems with which it is closely associated. This chain is Chlorophyll a-b binding protein CP29.3, chloroplastic (LHCB4.3), found in Arabidopsis thaliana (Mouse-ear cress).